Here is a 273-residue protein sequence, read N- to C-terminus: Dermonecrotic toxin LsaSicTox-alphaIB1aiii (273 aa).

Residue H5 is part of the active site. The Mg(2+) site is built by E25 and D27. H41 acts as the Nucleophile in catalysis. 2 cysteine pairs are disulfide-bonded: C45–C51 and C47–C190. Mg(2+) is bound at residue D85.

It belongs to the arthropod phospholipase D family. Class II subfamily. Requires Mg(2+) as cofactor. As to expression, expressed by the venom gland.

The protein resides in the secreted. It catalyses the reaction an N-(acyl)-sphingosylphosphocholine = an N-(acyl)-sphingosyl-1,3-cyclic phosphate + choline. The enzyme catalyses an N-(acyl)-sphingosylphosphoethanolamine = an N-(acyl)-sphingosyl-1,3-cyclic phosphate + ethanolamine. It carries out the reaction a 1-acyl-sn-glycero-3-phosphocholine = a 1-acyl-sn-glycero-2,3-cyclic phosphate + choline. The catalysed reaction is a 1-acyl-sn-glycero-3-phosphoethanolamine = a 1-acyl-sn-glycero-2,3-cyclic phosphate + ethanolamine. Functionally, dermonecrotic toxins cleave the phosphodiester linkage between the phosphate and headgroup of certain phospholipids (sphingolipid and lysolipid substrates), forming an alcohol (often choline) and a cyclic phosphate. This toxin acts on sphingomyelin (SM). It may also act on ceramide phosphoethanolamine (CPE), lysophosphatidylcholine (LPC) and lysophosphatidylethanolamine (LPE), but not on lysophosphatidylserine (LPS), and lysophosphatidylglycerol (LPG). It acts by transphosphatidylation, releasing exclusively cyclic phosphate products as second products. Induces dermonecrosis, hemolysis, increased vascular permeability, edema, inflammatory response, and platelet aggregation. In Loxosceles sabina (Tucson recluse spider), this protein is Dermonecrotic toxin LsaSicTox-alphaIB1aiii.